The following is a 1507-amino-acid chain: DNA-directed RNA polymerase subunit beta' (1507 aa).

Positions 71, 73, 86, and 89 each coordinate Zn(2+). Mg(2+) contacts are provided by D470, D472, and D474. Zn(2+) contacts are provided by C800, C874, C881, and C884.

This sequence belongs to the RNA polymerase beta' chain family. As to quaternary structure, the RNAP catalytic core consists of 2 alpha, 1 beta, 1 beta' and 1 omega subunit. When a sigma factor is associated with the core the holoenzyme is formed, which can initiate transcription. The cofactor is Mg(2+). It depends on Zn(2+) as a cofactor.

The catalysed reaction is RNA(n) + a ribonucleoside 5'-triphosphate = RNA(n+1) + diphosphate. Its function is as follows. DNA-dependent RNA polymerase catalyzes the transcription of DNA into RNA using the four ribonucleoside triphosphates as substrates. The protein is DNA-directed RNA polymerase subunit beta' of Nitratiruptor sp. (strain SB155-2).